Reading from the N-terminus, the 444-residue chain is Ribosomal protein uS12 methylthiotransferase RimO (444 aa).

The MTTase N-terminal domain occupies 2–118 (PSIGLLSLGC…IVEVVNHALE (117 aa)). Positions 11, 47, 81, 156, 160, and 163 each coordinate [4Fe-4S] cluster. The 231-residue stretch at 142–372 (STPSYTAYVK…MKLQREISLS (231 aa)) folds into the Radical SAM core domain. The 70-residue stretch at 375 to 444 (QKRIGQEIEV…EYDLMGELAQ (70 aa)) folds into the TRAM domain.

Belongs to the methylthiotransferase family. RimO subfamily. [4Fe-4S] cluster serves as cofactor.

It is found in the cytoplasm. The enzyme catalyses L-aspartate(89)-[ribosomal protein uS12]-hydrogen + (sulfur carrier)-SH + AH2 + 2 S-adenosyl-L-methionine = 3-methylsulfanyl-L-aspartate(89)-[ribosomal protein uS12]-hydrogen + (sulfur carrier)-H + 5'-deoxyadenosine + L-methionine + A + S-adenosyl-L-homocysteine + 2 H(+). Catalyzes the methylthiolation of an aspartic acid residue of ribosomal protein uS12. This is Ribosomal protein uS12 methylthiotransferase RimO from Desulforamulus reducens (strain ATCC BAA-1160 / DSM 100696 / MI-1) (Desulfotomaculum reducens).